The following is a 362-amino-acid chain: Chorismate synthase (362 aa).

Arg-47 is a binding site for NADP(+). FMN-binding positions include 124-126 (RSS), Gly-286, 301-305 (KPTAT), and Arg-327.

It belongs to the chorismate synthase family. Homotetramer. The cofactor is FMNH2.

It catalyses the reaction 5-O-(1-carboxyvinyl)-3-phosphoshikimate = chorismate + phosphate. It participates in metabolic intermediate biosynthesis; chorismate biosynthesis; chorismate from D-erythrose 4-phosphate and phosphoenolpyruvate: step 7/7. Catalyzes the anti-1,4-elimination of the C-3 phosphate and the C-6 proR hydrogen from 5-enolpyruvylshikimate-3-phosphate (EPSP) to yield chorismate, which is the branch point compound that serves as the starting substrate for the three terminal pathways of aromatic amino acid biosynthesis. This reaction introduces a second double bond into the aromatic ring system. The protein is Chorismate synthase of Synechocystis sp. (strain ATCC 27184 / PCC 6803 / Kazusa).